We begin with the raw amino-acid sequence, 165 residues long: Large ribosomal subunit protein uL15 (165 aa).

Basic residues predominate over residues 1 to 30 (MTNKKRRQRGSRTHGGGTHKNRRGAGHRGG). Disordered regions lie at residues 1–39 (MTNKKRRQRGSRTHGGGTHKNRRGAGHRGGRGAAGRAKH) and 137–165 (AGGEATLSERAEEAADESENTSDDEDDEA). The span at 150 to 165 (AADESENTSDDEDDEA) shows a compositional bias: acidic residues.

This sequence belongs to the universal ribosomal protein uL15 family. In terms of assembly, part of the 50S ribosomal subunit.

Functionally, binds to the 23S rRNA. The sequence is that of Large ribosomal subunit protein uL15 from Halorubrum lacusprofundi (strain ATCC 49239 / DSM 5036 / JCM 8891 / ACAM 34).